Here is a 364-residue protein sequence, read N- to C-terminus: Protein MGF 360-21R (364 aa).

The protein belongs to the asfivirus MGF 360 family.

Its function is as follows. Plays a role in virus cell tropism, and may be required for efficient virus replication in macrophages. The protein is Protein MGF 360-21R of African swine fever virus (isolate Pig/Kenya/KEN-50/1950) (ASFV).